A 500-amino-acid polypeptide reads, in one-letter code: GTPase Der (500 aa).

2 consecutive EngA-type G domains span residues 3-166 (PVVA…MEEL) and 211-384 (IKLA…VSAT). GTP is bound by residues 9-16 (GRPNVGKS), 56-60 (DTGGI), 118-121 (NKID), 217-224 (GRPNVGKS), 264-268 (DTAGV), and 329-332 (NKWD). Positions 385–469 (KRVGTSVLTR…PIRIQFQNSE (85 aa)) constitute a KH-like domain. Residues 468–500 (SENPFEDRGGKLTMSQERQRKRLLGAVKNRNKK) are disordered. Positions 486–500 (QRKRLLGAVKNRNKK) are enriched in basic residues.

Belongs to the TRAFAC class TrmE-Era-EngA-EngB-Septin-like GTPase superfamily. EngA (Der) GTPase family. In terms of assembly, associates with the 50S ribosomal subunit.

Its function is as follows. GTPase that plays an essential role in the late steps of ribosome biogenesis. This Aliivibrio fischeri (strain ATCC 700601 / ES114) (Vibrio fischeri) protein is GTPase Der.